Reading from the N-terminus, the 479-residue chain is Aspartyl/glutamyl-tRNA(Asn/Gln) amidotransferase subunit B (479 aa).

This sequence belongs to the GatB/GatE family. GatB subfamily. As to quaternary structure, heterotrimer of A, B and C subunits.

The enzyme catalyses L-glutamyl-tRNA(Gln) + L-glutamine + ATP + H2O = L-glutaminyl-tRNA(Gln) + L-glutamate + ADP + phosphate + H(+). The catalysed reaction is L-aspartyl-tRNA(Asn) + L-glutamine + ATP + H2O = L-asparaginyl-tRNA(Asn) + L-glutamate + ADP + phosphate + 2 H(+). In terms of biological role, allows the formation of correctly charged Asn-tRNA(Asn) or Gln-tRNA(Gln) through the transamidation of misacylated Asp-tRNA(Asn) or Glu-tRNA(Gln) in organisms which lack either or both of asparaginyl-tRNA or glutaminyl-tRNA synthetases. The reaction takes place in the presence of glutamine and ATP through an activated phospho-Asp-tRNA(Asn) or phospho-Glu-tRNA(Gln). The chain is Aspartyl/glutamyl-tRNA(Asn/Gln) amidotransferase subunit B from Deinococcus radiodurans (strain ATCC 13939 / DSM 20539 / JCM 16871 / CCUG 27074 / LMG 4051 / NBRC 15346 / NCIMB 9279 / VKM B-1422 / R1).